We begin with the raw amino-acid sequence, 376 residues long: 26S proteasome non-ATPase regulatory subunit 13 (376 aa).

A PCI domain is found at 171 to 338; that stretch reads SYYKDALRFL…KRVHMTWVQP (168 aa).

This sequence belongs to the proteasome subunit S11 family. As to quaternary structure, component of the 19S proteasome regulatory particle complex. The 26S proteasome consists of a 20S core particle (CP) and two 19S regulatory subunits (RP). The regulatory particle is made of a lid composed of 9 subunits including PSMD13, a base containing 6 ATPases and few additional components.

Its function is as follows. Component of the 26S proteasome, a multiprotein complex involved in the ATP-dependent degradation of ubiquitinated proteins. This complex plays a key role in the maintenance of protein homeostasis by removing misfolded or damaged proteins, which could impair cellular functions, and by removing proteins whose functions are no longer required. Therefore, the proteasome participates in numerous cellular processes, including cell cycle progression, apoptosis, or DNA damage repair. This Bos taurus (Bovine) protein is 26S proteasome non-ATPase regulatory subunit 13 (PSMD13).